The primary structure comprises 528 residues: Extracellular serine/threonine protein CG31145 (528 aa).

The Cytoplasmic segment spans residues Met1 to Arg12. Positions Met1–Gln76 are excised as a propeptide. The helical transmembrane segment at Leu13–Gln33 threads the bilayer. The Lumenal segment spans residues Met34–Ser528. The interval Lys77–Asp130 is disordered. Asn79 carries an N-linked (GlcNAc...) asparagine glycan. The span at Ala86–Gly107 shows a compositional bias: low complexity. The N-linked (GlcNAc...) asparagine glycan is linked to Asn173. ATP contacts are provided by Gln220, Lys236, and Glu257. A Mn(2+)-binding site is contributed by Glu257. N-linked (GlcNAc...) asparagine glycosylation is present at Asn286. 2 disulfides stabilise this stretch: Cys312–Cys328 and Cys317–Cys321. Ala339–Leu342 is an ATP binding site. Cystine bridges form between Cys376/Cys450 and Cys451/Cys510. Residue Asp408 is part of the active site. ATP is bound at residue Glu413. Asn420 is a glycosylation site (N-linked (GlcNAc...) asparagine). Asp428 is an ATP binding site. Asp428 serves as a coordination point for Mn(2+).

Belongs to the FAM20 family. Requires Mn(2+) as cofactor. In embryos, prominently expressed in midline glia, salivary gland, intestine and dorsal vessel (heart). Not associated with biomineralization.

The protein resides in the golgi apparatus membrane. Its subcellular location is the secreted. The catalysed reaction is L-seryl-[protein] + ATP = O-phospho-L-seryl-[protein] + ADP + H(+). It catalyses the reaction L-threonyl-[protein] + ATP = O-phospho-L-threonyl-[protein] + ADP + H(+). Golgi serine/threonine protein kinase that phosphorylates secretory pathway proteins within Ser-x-Glu/pSer motifs. This chain is Extracellular serine/threonine protein CG31145, found in Drosophila melanogaster (Fruit fly).